Consider the following 318-residue polypeptide: Protein-methionine-sulfoxide reductase catalytic subunit MsrP (318 aa).

Residues 1–40 constitute a signal peptide (tat-type signal); the sequence is MNRFTRYDVTPEVIFNQRRQIIKAMGLGAAALSLPNIGFA. Residues N72, 75-76, C130, T165, N217, R222, and 233-235 each bind Mo-molybdopterin; these read YE and SIK.

It belongs to the MsrP family. Heterodimer of a catalytic subunit (MsrP) and a heme-binding subunit (MsrQ). It depends on Mo-molybdopterin as a cofactor. Predicted to be exported by the Tat system. The position of the signal peptide cleavage has not been experimentally proven.

It localises to the periplasm. The enzyme catalyses L-methionyl-[protein] + a quinone + H2O = L-methionyl-(S)-S-oxide-[protein] + a quinol. It carries out the reaction L-methionyl-[protein] + a quinone + H2O = L-methionyl-(R)-S-oxide-[protein] + a quinol. In terms of biological role, part of the MsrPQ system that repairs oxidized periplasmic proteins containing methionine sulfoxide residues (Met-O), using respiratory chain electrons. Thus protects these proteins from oxidative-stress damage caused by reactive species of oxygen and chlorine generated by the host defense mechanisms. MsrPQ is essential for the maintenance of envelope integrity under bleach stress, rescuing a wide series of structurally unrelated periplasmic proteins from methionine oxidation. The catalytic subunit MsrP is non-stereospecific, being able to reduce both (R-) and (S-) diastereoisomers of methionine sulfoxide. In Actinobacillus pleuropneumoniae serotype 3 (strain JL03), this protein is Protein-methionine-sulfoxide reductase catalytic subunit MsrP.